Reading from the N-terminus, the 223-residue chain is 2-C-methyl-D-erythritol 4-phosphate cytidylyltransferase (223 aa).

The protein belongs to the IspD/TarI cytidylyltransferase family. IspD subfamily.

The enzyme catalyses 2-C-methyl-D-erythritol 4-phosphate + CTP + H(+) = 4-CDP-2-C-methyl-D-erythritol + diphosphate. It functions in the pathway isoprenoid biosynthesis; isopentenyl diphosphate biosynthesis via DXP pathway; isopentenyl diphosphate from 1-deoxy-D-xylulose 5-phosphate: step 2/6. Functionally, catalyzes the formation of 4-diphosphocytidyl-2-C-methyl-D-erythritol from CTP and 2-C-methyl-D-erythritol 4-phosphate (MEP). This Prochlorococcus marinus (strain MIT 9515) protein is 2-C-methyl-D-erythritol 4-phosphate cytidylyltransferase.